The primary structure comprises 245 residues: Carboxy-S-adenosyl-L-methionine synthase (245 aa).

Residues Y42, 67-69, 92-93, 120-121, N135, and R202 each bind S-adenosyl-L-methionine; these read GCS, DN, and DI.

This sequence belongs to the class I-like SAM-binding methyltransferase superfamily. Cx-SAM synthase family. Homodimer.

It carries out the reaction prephenate + S-adenosyl-L-methionine = carboxy-S-adenosyl-L-methionine + 3-phenylpyruvate + H2O. Its function is as follows. Catalyzes the conversion of S-adenosyl-L-methionine (SAM) to carboxy-S-adenosyl-L-methionine (Cx-SAM). The polypeptide is Carboxy-S-adenosyl-L-methionine synthase (Vibrio vulnificus (strain CMCP6)).